A 449-amino-acid polypeptide reads, in one-letter code: Tryptophan--tRNA ligase (449 aa).

ATP-binding positions include 10–12 (TTT) and 18–19 (GN). The 'HIGH' region signature appears at 11–19 (TTGTPHLGN). Aspartate 143 contributes to the L-tryptophan binding site. Residues 155–157 (GRD), leucine 197, and 204–208 (KMSKS) each bind ATP. The short motif at 204-208 (KMSKS) is the 'KMSKS' region element.

Belongs to the class-I aminoacyl-tRNA synthetase family. In terms of assembly, homodimer.

The protein localises to the cytoplasm. It carries out the reaction tRNA(Trp) + L-tryptophan + ATP = L-tryptophyl-tRNA(Trp) + AMP + diphosphate + H(+). Its function is as follows. Catalyzes the attachment of tryptophan to tRNA(Trp). This chain is Tryptophan--tRNA ligase, found in Pseudomonas syringae pv. tomato (strain ATCC BAA-871 / DC3000).